A 1871-amino-acid polypeptide reads, in one-letter code: Protein RRP5 homolog (1871 aa).

A disordered region spans residues 1 to 62 (MANLEESFPR…KTKKLKIEKR (62 aa)). The residue at position 2 (Ala-2) is an N-acetylalanine. Phosphoserine is present on Ser-7. A compositionally biased stretch (basic residues) spans 43-59 (KRKKSQKGPAKTKKLKI). S1 motif domains follow at residues 83–171 (GMRI…LSLN), 187–258 (GMLL…LSVG), 281–346 (GLVV…LSLR), and 365–436 (GAVL…LSLR). Ser-438 carries the phosphoserine modification. S1 motif domains follow at residues 453 to 522 (GAVV…MTLK), 542 to 611 (GLQT…LSFK), 636 to 707 (GQLV…LCRK), and 729 to 798 (GMLL…LSLR). A disordered region spans residues 998 to 1018 (AAKRTMRPTQKDSETVDEDEE). Lys-1030 participates in a covalent cross-link: Glycyl lysine isopeptide (Lys-Gly) (interchain with G-Cter in SUMO1). S1 motif domains lie at 1036–1109 (GDMV…ISHP), 1149–1222 (GQTV…LSLT), 1230–1298 (GEVA…LSLR), and 1324–1396 (GQLL…LSFL). Phosphoserine is present on residues Ser-1360 and Ser-1362. Disordered regions lie at residues 1395-1531 (FLPG…APRL) and 1549-1586 (ALPP…KAEK). Lys-1416 participates in a covalent cross-link: Glycyl lysine isopeptide (Lys-Gly) (interchain with G-Cter in SUMO2). Composition is skewed to basic and acidic residues over residues 1416–1459 (KQEE…EKQQ) and 1469–1484 (GGRE…ERVS). Phosphoserine occurs at positions 1476, 1493, and 1498. Basic and acidic residues predominate over residues 1575–1586 (KERELEKQKAEK). 4 HAT repeats span residues 1599 to 1631 (GRQP…FHLQ), 1705 to 1737 (EKFQ…FLLR), 1775 to 1807 (GDAE…MTIK), and 1809 to 1844 (GSQK…YEKQ).

Interacts with NF-kappa-B p50/NFKB1 and NF-kappa-B p65/RELA.

The protein localises to the nucleus. Its subcellular location is the nucleolus. In terms of biological role, essential for the generation of mature 18S rRNA, specifically necessary for cleavages at sites A0, 1 and 2 of the 47S precursor. Directly interacts with U3 snoRNA. Functionally, involved in the biogenesis of rRNA. The polypeptide is Protein RRP5 homolog (PDCD11) (Homo sapiens (Human)).